A 168-amino-acid polypeptide reads, in one-letter code: Ribosome maturation factor RimM (168 aa).

The PRC barrel domain occupies P97–I168.

This sequence belongs to the RimM family. In terms of assembly, binds ribosomal protein uS19.

The protein localises to the cytoplasm. An accessory protein needed during the final step in the assembly of 30S ribosomal subunit, possibly for assembly of the head region. Essential for efficient processing of 16S rRNA. May be needed both before and after RbfA during the maturation of 16S rRNA. It has affinity for free ribosomal 30S subunits but not for 70S ribosomes. The polypeptide is Ribosome maturation factor RimM (Pseudothermotoga lettingae (strain ATCC BAA-301 / DSM 14385 / NBRC 107922 / TMO) (Thermotoga lettingae)).